A 746-amino-acid polypeptide reads, in one-letter code: PAN2-PAN3 deadenylation complex subunit pan3 (746 aa).

The C3H1-type zinc-finger motif lies at 7–35 (PKNQKQCKNIALHGYCRNSDKCEFSHELT). Residues 64–97 (QQQQQQQNSNGNGSNNTATSNNPIISPNSNIASP) show a composition bias toward low complexity. Disordered stretches follow at residues 64 to 100 (QQQQ…PLKK), 169 to 205 (DDQH…NMNN), and 219 to 275 (NASP…PSLQ). Over residues 196–205 (NNGIDPNMNN) the composition is skewed to polar residues. Positions 221 to 275 (SPQSYQQQFQQPNPSPQSSSQQQQQQQQQQQQAVYQQQQQQQPSSQPLAQNPSLQ) are enriched in low complexity. The interval 351–610 (DPNDPRIKNI…NIDEVVLMIS (260 aa)) is pseudokinase domain. Residues arginine 407, 457-464 (EFFPGSET), and 509-510 (SK) contribute to the ATP site. Residues 611–649 (GRLLQENNYLHTYTDDLETELSKEYENGRLFRLVTKLGF) adopt a coiled-coil conformation. Residues 650–746 (INERPLYDMD…SELVSQKSHI (97 aa)) are knob domain.

It belongs to the protein kinase superfamily. PAN3 family. As to quaternary structure, homodimer. Forms a heterotrimer with a catalytic subunit PAN2 to form the poly(A)-nuclease (PAN) deadenylation complex. Interacts (via PAM-2 motif) with poly(A)-binding protein (via PABC domain), conferring substrate specificity of the enzyme complex.

The protein resides in the cytoplasm. Functionally, regulatory subunit of the poly(A)-nuclease (PAN) deadenylation complex, one of two cytoplasmic mRNA deadenylases involved in mRNA turnover. PAN specifically shortens poly(A) tails of RNA and the activity is stimulated by poly(A)-binding protein (PABP). PAN deadenylation is followed by rapid degradation of the shortened mRNA tails by the CCR4-NOT complex. Deadenylated mRNAs are then degraded by two alternative mechanisms, namely exosome-mediated 3'-5' exonucleolytic degradation, or deadenylation-dependent mRNA decaping and subsequent 5'-3' exonucleolytic degradation by XRN1. PAN3 acts as a positive regulator for PAN activity, recruiting the catalytic subunit PAN2 to mRNA via its interaction with RNA and PABP. The sequence is that of PAN2-PAN3 deadenylation complex subunit pan3 from Dictyostelium discoideum (Social amoeba).